Consider the following 64-residue polypeptide: DNA gyrase inhibitor YacG (64 aa).

Residues Cys-7, Cys-10, Cys-26, and Cys-30 each contribute to the Zn(2+) site. The segment at 44 to 64 (RIPGEIDPELLPYPEEGEQWQ) is disordered.

It belongs to the DNA gyrase inhibitor YacG family. Interacts with GyrB. It depends on Zn(2+) as a cofactor.

Its function is as follows. Inhibits all the catalytic activities of DNA gyrase by preventing its interaction with DNA. Acts by binding directly to the C-terminal domain of GyrB, which probably disrupts DNA binding by the gyrase. The chain is DNA gyrase inhibitor YacG from Aeromonas hydrophila subsp. hydrophila (strain ATCC 7966 / DSM 30187 / BCRC 13018 / CCUG 14551 / JCM 1027 / KCTC 2358 / NCIMB 9240 / NCTC 8049).